The following is a 435-amino-acid chain: D-amino acid dehydrogenase (435 aa).

FAD is bound at residue 3-17 (VIVLGGGVLGVSTAW).

Belongs to the DadA oxidoreductase family. The cofactor is FAD.

It carries out the reaction a D-alpha-amino acid + A + H2O = a 2-oxocarboxylate + AH2 + NH4(+). Its pathway is amino-acid degradation; D-alanine degradation; NH(3) and pyruvate from D-alanine: step 1/1. Oxidative deamination of D-amino acids. This chain is D-amino acid dehydrogenase, found in Chromobacterium violaceum (strain ATCC 12472 / DSM 30191 / JCM 1249 / CCUG 213 / NBRC 12614 / NCIMB 9131 / NCTC 9757 / MK).